The sequence spans 378 residues: Stimulator of interferon genes protein (378 aa).

Residues 1-17 (MPYSSLHPSIPQPRGLR) lie on the Cytoplasmic side of the membrane. The interval 1-190 (MPYSSLHPSI…AYNQRHKNVL (190 aa)) is mediates interaction with ZDHHC1 and ZDHHC11. The helical transmembrane segment at 18–34 (AQVAALVLLGACLVALW) threads the bilayer. Residues 35-44 (GLGELPEYTL) are Lumenal-facing. A helical transmembrane segment spans residues 45 to 69 (RWLVLHLASQQIGLLVKGLCSLAEE). Residues 70–91 (LCHVHSRYQSSYWRAARACLGC) lie on the Cytoplasmic side of the membrane. Residues Cys-88 and Cys-91 are each lipidated (S-palmitoyl cysteine). A helical transmembrane segment spans residues 92–106 (PIRCGALLLLSCYFY). Over 107-116 (FSIRDKAGLP) the chain is Lumenal. Residues 117-134 (LPWMLALLGLSQALNILL) form a helical membrane-spanning segment. Over 135–378 (GLQHLAPAEV…QPLPLRSDIF (244 aa)) the chain is Cytoplasmic. Lys-150 is covalently cross-linked (Glycyl lysine isopeptide (Lys-Gly) (interchain with G-Cter in ubiquitin)). The cyclic dinucleotide-binding domain (CBD) stretch occupies residues 153–339 (FNVAHGLAWS…LRHLRQEERE (187 aa)). The 2',3'-cGAMP site is built by Ser-162 and Tyr-167. 2 residues coordinate 3',3'-c-di-GMP: Ser-162 and Tyr-167. Tyr-167 serves as a coordination point for 2',3'-cUAMP. A Glycyl lysine isopeptide (Lys-Gly) (interchain with G-Cter in ubiquitin) cross-link involves residue Lys-236. The 2',3'-cGAMP site is built by Arg-238 and Thr-263. Residues Arg-238 and Thr-263 each coordinate 2',3'-cUAMP. 3',3'-c-di-GMP-binding positions include 238-241 (RVYT) and Thr-263. A C-terminal tail (CTT) region spans residues 339 to 378 (EVTMGSAETSVVPTSSTLSQEPELLISGMEQPLPLRSDIF). Ser-354 is subject to Phosphoserine. Thr-355 carries the phosphothreonine modification. Ser-357 and Ser-365 each carry phosphoserine; by TBK1. The short motif at 362–365 (LLIS) is the pLxIS motif element.

It belongs to the STING family. In terms of assembly, homodimer; forms a homodimer in absence of cyclic nucleotide (c-di-GMP or cGAMP); 'Lys-63'-linked ubiquitination at Lys-150 is required for homodimerization. Homotetramer; in presence of cyclic nucleotide (c-di-GMP or cGAMP), forms tetramers and higher-order oligomers through side-by-side packing. Interacts (when phosphorylated) with IRF3; following activation and phosphorylation on the pLxIS motif by TBK1, recruits IRF3. Interacts with DDX58/RIG-I, MAVS and SSR2. Interacts with RNF5 and TRIM56. Interacts with TBK1; when homodimer, leading to subsequent production of IFN-beta. Interacts with IFIT1 and IFIT2. Interacts with TRIM29; this interaction induces STING1 ubiquitination and subsequent degradation. Associates with the MHC-II complex. Interacts with STEEP1; interaction takes place upon cGAMP-activation and STING1 phosphorylation by MAP3K7/TAK1 and promotes STING1 translocation to COPII vesicles. Interacts with SEC24A, SEC24B and SEC24C; promoting translocation to COPII vesicles. Interacts (when ubiquitinated) with SQSTM1; leading to relocalization to autophagosomes. Interacts with SURF4. Interacts with HNRNPA2B1. Interacts with ZDHHC1; ZDHHC1 constitutively interacts with STING1 and in presence of DNA viruses activates it by promoting its cGAMP-induced oligomerization and the recruitment of downstream signaling components. Interacts with ZDHHC11; in presence of DNA viruses promotes the recruitment of IRF3 to STING1. Interacts with TOMM70. Interacts with TAB1; promoting recruitment of TAB1 to the endoplasmic reticulum membrane and subsequent activation of MAP3K7/TAK1. Interacts (via transmembrane domain) with TMEM203. Interacts with DDX41. (Microbial infection) Interacts with African swine fever virus/ASFV protein A528R; this interaction mediates STING1 degradation. As to quaternary structure, (Microbial infection) Interacts with African swine fever virus/ASFV minor capsid protein p17. In terms of assembly, (Microbial infection) Interacts with Pseudorabies virus protein UL13; this interaction mediates STING1 degradation in a RNF5-dependent manner. Phosphorylation by TBK1 leads to activation and production of IFN-beta. Following cyclic nucleotide (c-di-GMP or cGAMP)-binding, activation and translocation from the endoplasmic reticulum, STING1 is phosphorylated by TBK1 at Ser-365 in the pLxIS motif. The phosphorylated pLxIS motif constitutes an IRF3-binding motif, leading to recruitment of the transcription factor IRF3 to induce type-I interferons and other cytokines. Phosphorylated on tyrosine residues upon MHC-II aggregation. Dephosphorylation by PPP6C leads to inactivation and decreased production of IFN-beta. Phosphorylation at Ser-357 is also required to activate IRF3. Phosphorylation at Ser-354 by MAP3K7/TAK1 facilitates its interaction with STEEP1, promoting STING1 translocation to COPII vesicles. Post-translationally, ubiquitinated. Ubiquitinated via 'Lys-63'-linked ubiquitin chains in response to double-stranded DNA treatment, leading to relocalization to autophagosomes and subsequent degradation; this process is dependent on SQSTM1. 'Lys-63'-linked ubiquitination mediated by TRIM56 at Lys-150 promotes homodimerization and recruitment of the antiviral kinase TBK1 and subsequent production of IFN-beta. 'Lys-48'-linked polyubiquitination at Lys-150 occurring after viral infection is mediated by RNF5 and leads to proteasomal degradation. 'Lys-11'-linked polyubiquitination at Lys-150 by RNF26 leads to stabilize STING1: it protects STING1 from RNF5-mediated 'Lys-48'-linked polyubiquitination. 'Lys-33'-linked and 'Lys-48'-linked deubiquitinated by USP20; leading to its stabilization and promotion of innate antiviral response. 'Lys-48'-linked deubiquitinated by USP44; leading to its stabilization and promotion of innate antiviral response. Deubiquitinated by USP13; leading to inhibition of innate antiviral response. 'Lys-63'-linked deubiquitinated by USP49; leading to inhibition of the subsequent recruitment of TBK1 to the signaling complex. 'Lys-63'-linked ubiquitination mediated by RNF39 promotes the activation of the cGAS-STING pathway. In terms of processing, palmitoylation takes place in the Golgi apparatus and creates a platform for the recruitment of TBK1. As to expression, expressed at higher level in the spleen, lymph node, lung and bone marrow, followed by the small intestine, heart, liver and brain, and to a lesser extent in the stomach and kidney.

It is found in the endoplasmic reticulum membrane. The protein resides in the cytoplasm. Its subcellular location is the perinuclear region. The protein localises to the endoplasmic reticulum-Golgi intermediate compartment membrane. It localises to the golgi apparatus membrane. It is found in the cytoplasmic vesicle. The protein resides in the autophagosome membrane. Its subcellular location is the mitochondrion outer membrane. The protein localises to the cell membrane. It carries out the reaction H(+)(in) = H(+)(out). Functionally, facilitator of innate immune signaling that acts as a sensor of cytosolic DNA from bacteria and viruses and promotes the production of type I interferon (IFN-alpha and IFN-beta). Innate immune response is triggered in response to non-CpG double-stranded DNA from viruses and bacteria delivered to the cytoplasm. Acts by binding cyclic dinucleotides: recognizes and binds cyclic di-GMP (c-di-GMP), a second messenger produced by bacteria, cyclic UMP-AMP (2',3'-cUAMP), and cyclic GMP-AMP (cGAMP), a messenger produced by CGAS in response to DNA virus in the cytosol. Upon binding to c-di-GMP, cUAMP or cGAMP, STING1 oligomerizes, translocates from the endoplasmic reticulum and is phosphorylated by TBK1 on the pLxIS motif, leading to recruitment and subsequent activation of the transcription factor IRF3 to induce expression of type I interferon and exert a potent anti-viral state. Exhibits 2',3' phosphodiester linkage-specific ligand recognition: can bind both 2'-3' linked cGAMP (2'-3'-cGAMP) and 3'-3' linked cGAMP but is preferentially activated by 2'-3' linked cGAMP. The preference for 2'-3'-cGAMP, compared to other linkage isomers is probably due to the ligand itself, whichs adopts an organized free-ligand conformation that resembles the STING1-bound conformation and pays low energy costs in changing into the active conformation. In addition to promote the production of type I interferons, plays a direct role in autophagy. Following cGAMP-binding, STING1 buds from the endoplasmic reticulum into COPII vesicles, which then form the endoplasmic reticulum-Golgi intermediate compartment (ERGIC). The ERGIC serves as the membrane source for WIPI2 recruitment and LC3 lipidation, leading to formation of autophagosomes that target cytosolic DNA or DNA viruses for degradation by the lysosome. Promotes autophagy by acting as a proton channel that directs proton efflux from the Golgi to facilitate MAP1LC3B/LC3B lipidation. The autophagy- and interferon-inducing activities can be uncoupled and autophagy induction is independent of TBK1 phosphorylation. Autophagy is also triggered upon infection by bacteria: following c-di-GMP-binding, which is produced by live Gram-positive bacteria, promotes reticulophagy. May be involved in translocon function, the translocon possibly being able to influence the induction of type I interferons. May be involved in transduction of apoptotic signals via its association with the major histocompatibility complex class II (MHC-II). The polypeptide is Stimulator of interferon genes protein (Sus scrofa (Pig)).